Consider the following 347-residue polypeptide: MRIEEDLKLGFKDVLFRPKRSTLSSRSQVELHREFRFRHTQTSWRGVPIIAANMDTVGTFAMAKALASFDVMTAIHKHYTEQEWQTFVQNSSDPLLQYCMVSTGTSNNDFLKLQRILALSPALRFICVDVANGYSEHFADFVKIVRETFPQHVICAGNVVTGEMVEELILSGADIVKVGIGPGSVCTTRVKTGVGYPQLSAIIECADAAHGLGGQIVGDGGCTCPGDVAKAFGGGADFVMLGGMLAAHEESGGNKFERDGKTFMRFYGMSSSTAMEQHAGGIAHYRASEGKTVELPFRGPVSATIQDILGGVRSTCTYVGAAKLKELTKRTTFIRVSEQENPVYGQE.

108 to 131 (NDFLKLQRILALSPALRFICVDVA) provides a ligand contact to NADP(+). Residues Gly-181 and Gly-183 each contribute to the K(+) site. The active-site Thioimidate intermediate is the Cys-186. 216–239 (IVGDGGCTCPGDVAKAFGGGADFV) serves as a coordination point for NADP(+).

It belongs to the IMPDH/GMPR family. GuaC type 1 subfamily. As to quaternary structure, homotetramer.

It carries out the reaction IMP + NH4(+) + NADP(+) = GMP + NADPH + 2 H(+). Catalyzes the irreversible NADPH-dependent deamination of GMP to IMP. It functions in the conversion of nucleobase, nucleoside and nucleotide derivatives of G to A nucleotides, and in maintaining the intracellular balance of A and G nucleotides. This is GMP reductase from Tolumonas auensis (strain DSM 9187 / NBRC 110442 / TA 4).